The following is a 190-amino-acid chain: Probable nicotinate-nucleotide adenylyltransferase (190 aa).

The protein belongs to the NadD family.

The catalysed reaction is nicotinate beta-D-ribonucleotide + ATP + H(+) = deamido-NAD(+) + diphosphate. The protein operates within cofactor biosynthesis; NAD(+) biosynthesis; deamido-NAD(+) from nicotinate D-ribonucleotide: step 1/1. Functionally, catalyzes the reversible adenylation of nicotinate mononucleotide (NaMN) to nicotinic acid adenine dinucleotide (NaAD). The protein is Probable nicotinate-nucleotide adenylyltransferase of Frankia alni (strain DSM 45986 / CECT 9034 / ACN14a).